Consider the following 106-residue polypeptide: Large ribosomal subunit protein uL24 (106 aa).

This sequence belongs to the universal ribosomal protein uL24 family. As to quaternary structure, part of the 50S ribosomal subunit.

In terms of biological role, one of two assembly initiator proteins, it binds directly to the 5'-end of the 23S rRNA, where it nucleates assembly of the 50S subunit. Its function is as follows. One of the proteins that surrounds the polypeptide exit tunnel on the outside of the subunit. This chain is Large ribosomal subunit protein uL24, found in Polaromonas naphthalenivorans (strain CJ2).